The sequence spans 394 residues: GDSL esterase/lipase At1g31550 (394 aa).

The N-terminal stretch at 1-27 (MASLDSHVLMKLGSLFLSTLFVSIVSS) is a signal peptide. The Nucleophile role is filled by serine 43. N-linked (GlcNAc...) asparagine glycosylation is found at asparagine 138, asparagine 290, and asparagine 322. Catalysis depends on residues aspartate 345 and histidine 348.

It belongs to the 'GDSL' lipolytic enzyme family.

It is found in the secreted. This chain is GDSL esterase/lipase At1g31550, found in Arabidopsis thaliana (Mouse-ear cress).